The primary structure comprises 346 residues: Coproporphyrin III ferrochelatase (346 aa).

Residues S52 and Y121 each coordinate Fe-coproporphyrin III. 2 residues coordinate Fe(2+): H181 and E264.

This sequence belongs to the ferrochelatase family.

It localises to the cytoplasm. It carries out the reaction Fe-coproporphyrin III + 2 H(+) = coproporphyrin III + Fe(2+). Its pathway is porphyrin-containing compound metabolism; protoheme biosynthesis. In terms of biological role, involved in coproporphyrin-dependent heme b biosynthesis. Catalyzes the insertion of ferrous iron into coproporphyrin III to form Fe-coproporphyrin III. This Mycobacterium sp. (strain KMS) protein is Coproporphyrin III ferrochelatase.